Consider the following 127-residue polypeptide: Protein NEGATIVE REGULATOR OF RESISTANCE (127 aa).

Disordered regions lie at residues 1–28 and 47–127; these read MDAT…VDEV and TRRL…RAPA. A compositionally biased stretch (low complexity) spans 112–127; sequence PPSDAPATPRSARAPA.

It belongs to the NPR1-interactor family. Interacts with NPR1/NH1. Interacts with NPR3/NH3.

Its subcellular location is the nucleus. Acts as a negative regulator of disease resistance. Acts on basal resistance, age-related resistance and resistance mediated by the LRR receptor kinase XA21. Plants over-expressing NRR display enhanced susceptibility to the bacterial blight Xanthomonas oryzae pv. oryzae (Xoo). Binds to and represses NPR1/NH1-mediated transcriptional activation of LG2 in vitro. The polypeptide is Protein NEGATIVE REGULATOR OF RESISTANCE (Oryza sativa subsp. japonica (Rice)).